The primary structure comprises 85 residues: Small muscular protein (85 aa).

A disordered region spans residues 19-63; that stretch reads PMGAFRPGAGQPPRRKESTPGTAEGAPATPEEKKPVPGMKKFPGP. Ser36 is subject to Phosphoserine. Position 47 is a phosphothreonine (Thr47).

Belongs to the SMPX family.

Its function is as follows. Plays a role in the regulatory network through which muscle cells coordinate their structural and functional states during growth, adaptation, and repair. The polypeptide is Small muscular protein (Smpx) (Rattus norvegicus (Rat)).